A 91-amino-acid polypeptide reads, in one-letter code: Non-hemolytic enterotoxin 105 kDa component (91 aa).

It depends on Zn(2+) as a cofactor.

Its subcellular location is the secreted. In terms of biological role, this protein is a metalloprotease with gelatinolytic and collagenolytic activity and is a component of the non-hemolytic enterotoxin complex (NHE). This chain is Non-hemolytic enterotoxin 105 kDa component, found in Bacillus cereus.